A 475-amino-acid polypeptide reads, in one-letter code: Sulfate adenylyltransferase subunit 1 (475 aa).

One can recognise a tr-type G domain in the interval 25–239 (KSLLRFLTCG…EVLETVEIQR (215 aa)). The interval 34 to 41 (GSVDDGKS) is G1. 34-41 (GSVDDGKS) is a GTP binding site. The interval 92–96 (GITID) is G2. Residues 113–116 (DTPG) form a G3 region. Residues 113 to 117 (DTPGH) and 168 to 171 (NKMD) each bind GTP. The interval 168–171 (NKMD) is G4. Positions 206–208 (SAL) are G5.

This sequence belongs to the TRAFAC class translation factor GTPase superfamily. Classic translation factor GTPase family. CysN/NodQ subfamily. As to quaternary structure, heterodimer composed of CysD, the smaller subunit, and CysN.

It carries out the reaction sulfate + ATP + H(+) = adenosine 5'-phosphosulfate + diphosphate. Its pathway is sulfur metabolism; hydrogen sulfide biosynthesis; sulfite from sulfate: step 1/3. Its function is as follows. With CysD forms the ATP sulfurylase (ATPS) that catalyzes the adenylation of sulfate producing adenosine 5'-phosphosulfate (APS) and diphosphate, the first enzymatic step in sulfur assimilation pathway. APS synthesis involves the formation of a high-energy phosphoric-sulfuric acid anhydride bond driven by GTP hydrolysis by CysN coupled to ATP hydrolysis by CysD. The sequence is that of Sulfate adenylyltransferase subunit 1 from Escherichia coli O9:H4 (strain HS).